Here is a 556-residue protein sequence, read N- to C-terminus: Oxygen-dependent choline dehydrogenase (556 aa).

4–33 (DYIIIGAGSAGNVLATRLTEDPNTTVLLLE) lines the FAD pocket. His473 serves as the catalytic Proton acceptor.

The protein belongs to the GMC oxidoreductase family. Requires FAD as cofactor.

It carries out the reaction choline + A = betaine aldehyde + AH2. The catalysed reaction is betaine aldehyde + NAD(+) + H2O = glycine betaine + NADH + 2 H(+). Its pathway is amine and polyamine biosynthesis; betaine biosynthesis via choline pathway; betaine aldehyde from choline (cytochrome c reductase route): step 1/1. Functionally, involved in the biosynthesis of the osmoprotectant glycine betaine. Catalyzes the oxidation of choline to betaine aldehyde and betaine aldehyde to glycine betaine at the same rate. The polypeptide is Oxygen-dependent choline dehydrogenase (Escherichia coli O6:K15:H31 (strain 536 / UPEC)).